The primary structure comprises 285 residues: Glutamate racemase (285 aa).

Residues 28-29 (DS) and 60-61 (YG) each bind substrate. The active-site Proton donor/acceptor is Cys92. 93-94 (NT) contacts substrate. UDP-N-acetyl-alpha-D-muramoyl-L-alanine-binding positions include Arg104 and 113–119 (GVVPAIK). The Proton donor/acceptor role is filled by Cys204. 205-206 (TH) provides a ligand contact to substrate.

This sequence belongs to the aspartate/glutamate racemases family. Monomer.

The catalysed reaction is L-glutamate = D-glutamate. The protein operates within cell wall biogenesis; peptidoglycan biosynthesis. With respect to regulation, the low basal catalytic activity in increased 1000-fold in the presence of UDP-MurNAc-L-Ala, the product of the preceding enzyme in the peptidoglycan biosynthesis. Functionally, provides the (R)-glutamate required for cell wall biosynthesis. The sequence is that of Glutamate racemase from Escherichia coli (strain K12).